The primary structure comprises 157 residues: Protein MG115 homolog (157 aa).

This sequence belongs to the CinA family.

This is Protein MG115 homolog from Mycoplasma pneumoniae (strain ATCC 29342 / M129 / Subtype 1) (Mycoplasmoides pneumoniae).